The chain runs to 196 residues: MTDRTAAVTRETAETDVAVTLDLDGDGEHTVDTGIGFFDHMLAAFAKHGLFDVTVRCDGDLDVDDHHTVEDVGIALGAAFSEAVGEKRGIQRFADRRVPLDEAVASVVVDVSGRAVYEFDGGFSQPTVGGLTSRMAAHFWRTFATHAAVTLHCGVDGENAHHEIEALFKGVGRAVDDATRIDQRRAGETPSTKGDL.

It belongs to the imidazoleglycerol-phosphate dehydratase family.

It is found in the cytoplasm. The enzyme catalyses D-erythro-1-(imidazol-4-yl)glycerol 3-phosphate = 3-(imidazol-4-yl)-2-oxopropyl phosphate + H2O. It participates in amino-acid biosynthesis; L-histidine biosynthesis; L-histidine from 5-phospho-alpha-D-ribose 1-diphosphate: step 6/9. The sequence is that of Imidazoleglycerol-phosphate dehydratase from Halobacterium salinarum (strain ATCC 700922 / JCM 11081 / NRC-1) (Halobacterium halobium).